We begin with the raw amino-acid sequence, 278 residues long: Pca operon regulatory protein (278 aa).

An HTH iclR-type domain is found at 31 to 91 (VAGISKGMAI…SDGHYFYLTP (61 aa)). A DNA-binding region (H-T-H motif) is located at residues 53–72 (ITMAAEKTGMTRAAARRHLL). Residues 106–278 (LPKISQPLLN…ETARELRNIL (173 aa)) form the IclR-ED domain.

Activates transcription of the pca operon. This is Pca operon regulatory protein (pcaU) from Acinetobacter baylyi (strain ATCC 33305 / BD413 / ADP1).